We begin with the raw amino-acid sequence, 79 residues long: MORN repeat-containing protein 2 (79 aa).

MORN repeat units follow at residues 15–37 (YEGHFKDNMFHGLGTYTFPNGAK) and 38–60 (YTGNFNENRVEGEGQYTDIQGLE).

The protein is MORN repeat-containing protein 2 (MORN2) of Bos taurus (Bovine).